A 211-amino-acid chain; its full sequence is Arginine exporter protein ArgO (211 aa).

The next 6 helical transmembrane spans lie at 1 to 21 (MISYYFQGFALGAAMILPLGP), 37 to 57 (LMIALLCALSDLVLISAGIFG), 68 to 88 (LLALVTWGGVAFLLWYGLGAL), 111 to 131 (IIATMLAVTWLNPHVYLDTFV), 147 to 167 (WFALGTISASFLWFFGLALLA), and 179 to 199 (AQRIINILVGVVMWLIAFQLA).

The protein belongs to the LysE/ArgO transporter (TC 2.A.75) family.

It localises to the cell inner membrane. It catalyses the reaction L-arginine(in) = L-arginine(out). Involved in the export of arginine. Important to control the intracellular level of arginine and the correct balance between arginine and lysine. The protein is Arginine exporter protein ArgO of Salmonella enteritidis PT4 (strain P125109).